The sequence spans 124 residues: Small ribosomal subunit protein uS12 (124 aa).

Residues 1–42 form a disordered region; that stretch reads MPTTQQLIRKGRKTEEETSDAPALEGSPQRRGVCTRVYTTTP. Aspartate 89 carries the post-translational modification 3-methylthioaspartic acid. Residues 105-124 form a disordered region; sequence AGVEERRQGRSKYGTKKPRE. Residues 113–124 show a composition bias toward basic residues; sequence GRSKYGTKKPRE.

The protein belongs to the universal ribosomal protein uS12 family. In terms of assembly, part of the 30S ribosomal subunit. Contacts proteins S8 and S17. May interact with IF1 in the 30S initiation complex.

Functionally, with S4 and S5 plays an important role in translational accuracy. Interacts with and stabilizes bases of the 16S rRNA that are involved in tRNA selection in the A site and with the mRNA backbone. Located at the interface of the 30S and 50S subunits, it traverses the body of the 30S subunit contacting proteins on the other side and probably holding the rRNA structure together. The combined cluster of proteins S8, S12 and S17 appears to hold together the shoulder and platform of the 30S subunit. The chain is Small ribosomal subunit protein uS12 from Salinibacter ruber (strain DSM 13855 / M31).